The sequence spans 299 residues: Maintenance of mitochondrial morphology protein 1 (299 aa).

The Lumenal segment spans residues 1–15 (MTNIIFSLQPTFTQG). A helical membrane pass occupies residues 16–36 (LILGQLSVLVLLGLILKYLFL). The Cytoplasmic portion of the chain corresponds to 37 to 299 (DSTKNPFETT…QEESKRQEEA (263 aa)). The tract at residues 47–68 (SYHPQFDRKPARKQQAQDSQSQ) is disordered. The SMP-LTD domain occupies 73–281 (DVESLDWFNL…LPGLASVAEA (209 aa)).

This sequence belongs to the MMM1 family. Homodimer. Component of the ER-mitochondria encounter structure (ERMES) or MDM complex, composed of MMM1, MDM10, MDM12 and MDM34. An MMM1 homodimer associates with one molecule of MDM12 on each side in a pairwise head-to-tail manner, and the SMP-LTD domains of MMM1 and MDM12 generate a continuous hydrophobic tunnel for phospholipid trafficking.

The protein localises to the endoplasmic reticulum membrane. Functionally, component of the ERMES/MDM complex, which serves as a molecular tether to connect the endoplasmic reticulum (ER) and mitochondria. Components of this complex are involved in the control of mitochondrial shape and protein biogenesis, and function in nonvesicular lipid trafficking between the ER and mitochondria. The MDM12-MMM1 subcomplex functions in the major beta-barrel assembly pathway that is responsible for biogenesis of all outer membrane beta-barrel proteins, and acts in a late step after the SAM complex. The MDM10-MDM12-MMM1 subcomplex further acts in the TOM40-specific pathway after the action of the MDM12-MMM1 complex. Essential for establishing and maintaining the structure of mitochondria and maintenance of mtDNA nucleoids. The polypeptide is Maintenance of mitochondrial morphology protein 1 (Coprinopsis cinerea (strain Okayama-7 / 130 / ATCC MYA-4618 / FGSC 9003) (Inky cap fungus)).